Here is a 1210-residue protein sequence, read N- to C-terminus: ATPase family AAA domain-containing protein At1g05910 (1210 aa).

Residues 1–11 are compositionally biased toward polar residues; sequence MHPKRSSQGDG. 2 disordered regions span residues 1–32 and 63–291; these read MHPKRSSQGDGSVTKPVRTSDRLRRRPKLHGR and LHKG…RTDD. Positions 97–109 are enriched in acidic residues; it reads DYTDSSGAEDEDM. Residues 130 to 146 show a composition bias toward basic and acidic residues; it reads SRKDMDAELAPRREGLR. Residues 167–226 are compositionally biased toward acidic residues; it reads DTSEEKDGQDETENGNELDDADDGENEVEAEDEGNGEDEGDGEDEGEEDGDDDEEGDEEQ. Basic and acidic residues predominate over residues 227–244; it reads EGRKRYDLRNRAEVRRMP. A compositionally biased stretch (basic residues) spans 276 to 286; the sequence is GGSRPHKRHRF. 422–429 lines the ATP pocket; that stretch reads GPPGTGKT. A disordered region spans residues 856-883; it reads LNGKPDGPQPLPELPKVPKEPTGPKPAE. A Bromo domain is found at 897–1000; it reads RLRMCLRDVC…DVVHGMLSQM (104 aa). Positions 1057–1070 are enriched in basic and acidic residues; sequence DRDYEGLKKPKKTT. The disordered stretch occupies residues 1057–1151; sequence DRDYEGLKKP…EISSRTESVK (95 aa). The segment covering 1080–1090 has biased composition (polar residues); sequence DKSQNQDSGQE. Basic and acidic residues-rich tracts occupy residues 1108–1123 and 1138–1151; these read DGDREDQSEPPSKEAS and KSDKEISSRTESVK.

It belongs to the AAA ATPase family.

This is ATPase family AAA domain-containing protein At1g05910 from Arabidopsis thaliana (Mouse-ear cress).